The sequence spans 321 residues: Queuosine 5'-phosphate N-glycosylase/hydrolase (321 aa).

Queuine contacts are provided by Phe227, Asp229, and Asp296. The Nucleophile or transition state stabilizer role is filled by Asp229.

It belongs to the QNG1 protein family.

It catalyses the reaction queuosine 5'-phosphate + H2O = queuine + D-ribose 5-phosphate. Its function is as follows. Catalyzes the hydrolysis of queuosine 5'-phosphate, releasing the nucleobase queuine (q). Is required for salvage of queuine from exogenous queuosine (Q) that is imported and then converted to queuosine 5'-phosphate intracellularly. This Dictyostelium discoideum (Social amoeba) protein is Queuosine 5'-phosphate N-glycosylase/hydrolase.